We begin with the raw amino-acid sequence, 385 residues long: 8-amino-7-oxononanoate synthase (385 aa).

Residue arginine 23 participates in substrate binding. 110–111 (GF) contributes to the pyridoxal 5'-phosphate binding site. A substrate-binding site is contributed by histidine 135. Pyridoxal 5'-phosphate contacts are provided by serine 180, histidine 208, and threonine 234. N6-(pyridoxal phosphate)lysine is present on lysine 237. Threonine 350 is a binding site for substrate.

It belongs to the class-II pyridoxal-phosphate-dependent aminotransferase family. BioF subfamily. Homodimer. The cofactor is pyridoxal 5'-phosphate.

It catalyses the reaction 6-carboxyhexanoyl-[ACP] + L-alanine + H(+) = (8S)-8-amino-7-oxononanoate + holo-[ACP] + CO2. It functions in the pathway cofactor biosynthesis; biotin biosynthesis. Functionally, catalyzes the decarboxylative condensation of pimeloyl-[acyl-carrier protein] and L-alanine to produce 8-amino-7-oxononanoate (AON), [acyl-carrier protein], and carbon dioxide. The protein is 8-amino-7-oxononanoate synthase of Vibrio vulnificus (strain CMCP6).